An 89-amino-acid chain; its full sequence is uncharacterized protein (89 aa).

The region spanning 1–89 (MEKYEKAAEI…KEIIKLVDEL (89 aa)) is the HTH arsR-type domain.

This is an uncharacterized protein from Methanocaldococcus jannaschii (strain ATCC 43067 / DSM 2661 / JAL-1 / JCM 10045 / NBRC 100440) (Methanococcus jannaschii).